Consider the following 469-residue polypeptide: Argininosuccinate lyase (469 aa).

Belongs to the lyase 1 family. Argininosuccinate lyase subfamily.

The protein resides in the cytoplasm. The catalysed reaction is 2-(N(omega)-L-arginino)succinate = fumarate + L-arginine. It functions in the pathway amino-acid biosynthesis; L-arginine biosynthesis; L-arginine from L-ornithine and carbamoyl phosphate: step 3/3. This is Argininosuccinate lyase from Mycolicibacterium smegmatis (strain ATCC 700084 / mc(2)155) (Mycobacterium smegmatis).